The following is a 393-amino-acid chain: DNA polymerase processivity factor (393 aa).

3 disordered regions span residues 25–50, 311–339, and 355–393; these read EMER…REPP, ESRF…ALAS, and KNGT…RCVV. Residues 31 to 41 are compositionally biased toward basic residues; that stretch reads RDHHRDHRDHR. Basic and acidic residues predominate over residues 311–333; that stretch reads ESRFERMGKQDDGKGDRSHKNDD.

It belongs to the herpesviridae polymerase accessory protein family.

Its function is as follows. Accessory subunit of the DNA polymerase that acts to increase the processivity of polymerization. This is DNA polymerase processivity factor (U27) from Human herpesvirus 6A (strain Uganda-1102) (HHV-6 variant A).